The chain runs to 183 residues: Adenine phosphoribosyltransferase (183 aa).

This sequence belongs to the purine/pyrimidine phosphoribosyltransferase family. Homodimer.

Its subcellular location is the cytoplasm. The enzyme catalyses AMP + diphosphate = 5-phospho-alpha-D-ribose 1-diphosphate + adenine. Its pathway is purine metabolism; AMP biosynthesis via salvage pathway; AMP from adenine: step 1/1. Catalyzes a salvage reaction resulting in the formation of AMP, that is energically less costly than de novo synthesis. The sequence is that of Adenine phosphoribosyltransferase from Escherichia coli O157:H7.